Here is an 867-residue protein sequence, read N- to C-terminus: Nitrate reductase [NADPH] (867 aa).

The segment at 38-58 is disordered; that stretch reads DIPLPPPSKEPTEVLSIDKPT. Residue cysteine 152 participates in Mo-molybdopterin binding. In terms of domain architecture, Cytochrome b5 heme-binding spans 514–589; sequence NRIIDLQEFK…MPDYHIGTMD (76 aa). 2 residues coordinate heme: histidine 549 and histidine 572. Positions 615-726 constitute an FAD-binding FR-type domain; it reads KSWTKATLVK…KGPTGRFEYL (112 aa). FAD contacts are provided by residues 669–672, 686–690, phenylalanine 691, 700–702, and threonine 753; these read RSYT, LVKIY, and KMT. 837-846 is an NADP(+) binding site; that stretch reads MVLICGPEAM.

This sequence belongs to the nitrate reductase family. Homodimer. It depends on FAD as a cofactor. The cofactor is heme. Mo-molybdopterin serves as cofactor.

The catalysed reaction is nitrite + NADP(+) + H2O = nitrate + NADPH + H(+). In terms of biological role, nitrate reductase is a key enzyme involved in the first step of nitrate assimilation in plants, fungi and bacteria. This is Nitrate reductase [NADPH] (niaD) from Aspergillus niger.